Here is a 1475-residue protein sequence, read N- to C-terminus: Protein Shroom4 (1475 aa).

A PDZ domain is found at 10 to 92 (YVPVQLQGGA…ILKLIVRRRN (83 aa)). 2 disordered regions span residues 151 to 175 (EKSSSIGSMESLEQPGQPTYEGHLL) and 202 to 321 (CALS…PPRS). Residues 249-258 (TSTSHASSYS) show a composition bias toward polar residues. Positions 294–312 (EQHRASEPVDSLPQKEKPG) are enriched in basic and acidic residues. A Phosphoserine modification is found at Ser412. Disordered regions lie at residues 432 to 523 (SKGM…PSAT), 542 to 577 (HTEASEEGDNEPKECGRLGGRRSGGPRGRSIQNRRR), 610 to 644 (NEAVEETQEPPESPPLSASNASLLPSYKNVPSPGD), and 658 to 688 (SECLSQASESSKARGGVEGRMSPGQRSGQSS). A compositionally biased stretch (basic and acidic residues) spans 471 to 485 (QTRKERKTTPLDDKL). Positions 513–523 (SDLTSQQPSAT) are enriched in polar residues. Over residues 542–557 (HTEASEEGDNEPKECG) the composition is skewed to basic and acidic residues. Gly residues predominate over residues 558 to 568 (RLGGRRSGGPR). Low complexity-rich tracts occupy residues 624–635 (PLSASNASLLPS) and 658–667 (SECLSQASES). Residue Ser722 is modified to Phosphoserine. Polar residues-rich tracts occupy residues 727 to 738 (AQPQVALSTEAP) and 775 to 791 (KSLSTSHLPGLTTHNNK). 2 disordered regions span residues 727 to 753 (AQPQVALSTEAPSNPDDSKELKTSTPQ) and 772 to 791 (ESSKSLSTSHLPGLTTHNNK). Ser1010 is modified (phosphoserine). 2 disordered regions span residues 1022–1041 (SNKPEESSVYEDENSVASMP) and 1055–1185 (SLEP…QSLQ). Residues 1090 to 1099 (FPPPRPPPPN) are compositionally biased toward pro residues. A compositionally biased stretch (low complexity) spans 1110–1125 (QLQQQQQQQQQQQQQQ). Residues 1128 to 1145 (EEEEEKEQEEEGEKEEDL) show a composition bias toward acidic residues. The segment covering 1149-1168 (YFSSELTGSCAPNTEEQPQS) has biased composition (polar residues). One can recognise an ASD2 domain in the interval 1190 to 1469 (FALHPSNFVP…QLKCLKESLH (280 aa)). Residues 1380–1470 (SESNQEKLVL…LKCLKESLHL (91 aa)) are a coiled coil.

The protein belongs to the shroom family. As to quaternary structure, interacts directly with F-actin. As to expression, detected in most adult tissues examined. Expressed in brain, lung, heart, liver, kidney, muscle and ovary. Expressed throughout the brain, with high expression in the brain stem and cerebellum and weaker expression in the hypothalamus, the hippocampus and the olfactory bulb. Expressed in wide range of cell types during development, including vascular endothelium and the polarized epithelium of the neural tube and kidney.

The protein localises to the cytoplasm. It is found in the cytoskeleton. In terms of biological role, probable regulator of cytoskeletal architecture that plays an important role in development. May regulate cellular and cytoskeletal architecture by modulating the spatial distribution of myosin II. The sequence is that of Protein Shroom4 (Shroom4) from Mus musculus (Mouse).